We begin with the raw amino-acid sequence, 388 residues long: Mannosyl-3-phosphoglycerate synthase (388 aa).

This sequence belongs to the glycosyltransferase 2 family.

It is found in the cytoplasm. The enzyme catalyses (2R)-3-phosphoglycerate + GDP-alpha-D-mannose = 2-O-(alpha-D-mannosyl)-3-phosphoglycerate + GDP + H(+). Its pathway is carbohydrate biosynthesis; 2-(alpha-D-mannosyl)-D-glycerate biosynthesis; 2-(alpha-D-mannosyl)-D-glycerate from GDP-alpha-D-mannose (MPG route): step 1/2. Transfers a mannosyl group from GDP-mannose to phosphoglycerate to form mannosyl-3-phosphoglycerate (MPG). This Aeropyrum pernix (strain ATCC 700893 / DSM 11879 / JCM 9820 / NBRC 100138 / K1) protein is Mannosyl-3-phosphoglycerate synthase (mngA).